The sequence spans 516 residues: Glucose-1-phosphate adenylyltransferase large subunit 1, chloroplastic/amyloplastic (516 aa).

A chloroplast-targeting transit peptide spans 1 to 45 (MQFALALDTNSGPHQIRSCEGDGIDRLEKLSIGGRKQEKALRNRC).

Belongs to the bacterial/plant glucose-1-phosphate adenylyltransferase family. Heterotetramer. As to expression, endosperm.

The protein localises to the plastid. It localises to the chloroplast. The protein resides in the amyloplast. The catalysed reaction is alpha-D-glucose 1-phosphate + ATP + H(+) = ADP-alpha-D-glucose + diphosphate. The protein operates within glycan biosynthesis; starch biosynthesis. Its activity is regulated as follows. Activated by 3'phosphoglycerate, inhibited by orthophosphate. Allosteric regulation. Its function is as follows. This protein plays a role in synthesis of starch. It catalyzes the synthesis of the activated glycosyl donor, ADP-glucose from Glc-1-P and ATP. The sequence is that of Glucose-1-phosphate adenylyltransferase large subunit 1, chloroplastic/amyloplastic (SH2) from Zea mays (Maize).